Consider the following 156-residue polypeptide: Small ribosomal subunit protein uS7 (156 aa).

Belongs to the universal ribosomal protein uS7 family. Part of the 30S ribosomal subunit. Contacts proteins S9 and S11.

In terms of biological role, one of the primary rRNA binding proteins, it binds directly to 16S rRNA where it nucleates assembly of the head domain of the 30S subunit. Is located at the subunit interface close to the decoding center, probably blocks exit of the E-site tRNA. The sequence is that of Small ribosomal subunit protein uS7 from Geobacter metallireducens (strain ATCC 53774 / DSM 7210 / GS-15).